The primary structure comprises 921 residues: Isoleucine--tRNA ligase (921 aa).

A 'HIGH' region motif is present at residues 57–67 (PYANGELHMGH). Glutamate 552 contributes to the L-isoleucyl-5'-AMP binding site. Positions 593-597 (KMSKS) match the 'KMSKS' region motif. Position 596 (lysine 596) interacts with ATP. Residues cysteine 888, cysteine 891, cysteine 908, and cysteine 911 each coordinate Zn(2+).

It belongs to the class-I aminoacyl-tRNA synthetase family. IleS type 1 subfamily. In terms of assembly, monomer. Zn(2+) is required as a cofactor.

It is found in the cytoplasm. It carries out the reaction tRNA(Ile) + L-isoleucine + ATP = L-isoleucyl-tRNA(Ile) + AMP + diphosphate. Catalyzes the attachment of isoleucine to tRNA(Ile). As IleRS can inadvertently accommodate and process structurally similar amino acids such as valine, to avoid such errors it has two additional distinct tRNA(Ile)-dependent editing activities. One activity is designated as 'pretransfer' editing and involves the hydrolysis of activated Val-AMP. The other activity is designated 'posttransfer' editing and involves deacylation of mischarged Val-tRNA(Ile). This is Isoleucine--tRNA ligase from Listeria welshimeri serovar 6b (strain ATCC 35897 / DSM 20650 / CCUG 15529 / CIP 8149 / NCTC 11857 / SLCC 5334 / V8).